The primary structure comprises 269 residues: 5'-nucleotidase SurE (269 aa).

The a divalent metal cation site is built by Asp11, Asp12, Ser42, and Asn90.

This sequence belongs to the SurE nucleotidase family. The cofactor is a divalent metal cation.

The protein resides in the cytoplasm. It catalyses the reaction a ribonucleoside 5'-phosphate + H2O = a ribonucleoside + phosphate. Functionally, nucleotidase that shows phosphatase activity on nucleoside 5'-monophosphates. The protein is 5'-nucleotidase SurE of Haloarcula marismortui (strain ATCC 43049 / DSM 3752 / JCM 8966 / VKM B-1809) (Halobacterium marismortui).